The chain runs to 179 residues: ATP synthase subunit delta, chloroplastic (179 aa).

It belongs to the ATPase delta chain family. F-type ATPases have 2 components, F(1) - the catalytic core - and F(0) - the membrane proton channel. F(1) has five subunits: alpha(3), beta(3), gamma(1), delta(1), epsilon(1). CF(0) has four main subunits: a(1), b(1), b'(1) and c(10-14). The alpha and beta chains form an alternating ring which encloses part of the gamma chain. F(1) is attached to F(0) by a central stalk formed by the gamma and epsilon chains, while a peripheral stalk is formed by the delta, b and b' chains.

Its subcellular location is the plastid. The protein resides in the chloroplast thylakoid membrane. In terms of biological role, f(1)F(0) ATP synthase produces ATP from ADP in the presence of a proton or sodium gradient. F-type ATPases consist of two structural domains, F(1) containing the extramembraneous catalytic core and F(0) containing the membrane proton channel, linked together by a central stalk and a peripheral stalk. During catalysis, ATP synthesis in the catalytic domain of F(1) is coupled via a rotary mechanism of the central stalk subunits to proton translocation. This protein is part of the stalk that links CF(0) to CF(1). It either transmits conformational changes from CF(0) to CF(1) or is implicated in proton conduction. This chain is ATP synthase subunit delta, chloroplastic, found in Ochrosphaera neapolitana.